The following is a 432-amino-acid chain: Dihydroorotase (432 aa).

Residues histidine 60 and histidine 62 each contribute to the Zn(2+) site. Substrate-binding positions include 62–64 (HLR) and asparagine 94. Zn(2+) is bound by residues aspartate 152, histidine 179, and histidine 232. Residue asparagine 278 coordinates substrate. Aspartate 305 contributes to the Zn(2+) binding site. Aspartate 305 is an active-site residue. Substrate is bound by residues histidine 309 and 323-324 (FG).

The protein belongs to the metallo-dependent hydrolases superfamily. DHOase family. Class I DHOase subfamily. Requires Zn(2+) as cofactor.

It catalyses the reaction (S)-dihydroorotate + H2O = N-carbamoyl-L-aspartate + H(+). It functions in the pathway pyrimidine metabolism; UMP biosynthesis via de novo pathway; (S)-dihydroorotate from bicarbonate: step 3/3. In terms of biological role, catalyzes the reversible cyclization of carbamoyl aspartate to dihydroorotate. The polypeptide is Dihydroorotase (Elusimicrobium minutum (strain Pei191)).